The sequence spans 226 residues: tRNA (guanine-N(7)-)-methyltransferase (226 aa).

The S-adenosyl-L-methionine site is built by Glu-59, Glu-84, Asp-111, and Asp-134. Asp-134 is an active-site residue. Lys-138 contacts substrate. The segment at 140–145 is interaction with RNA; the sequence is RHNKRR. Substrate is bound by residues Asp-170 and 205 to 208; that span reads TKFE.

Belongs to the class I-like SAM-binding methyltransferase superfamily. TrmB family.

It carries out the reaction guanosine(46) in tRNA + S-adenosyl-L-methionine = N(7)-methylguanosine(46) in tRNA + S-adenosyl-L-homocysteine. The protein operates within tRNA modification; N(7)-methylguanine-tRNA biosynthesis. Catalyzes the formation of N(7)-methylguanine at position 46 (m7G46) in tRNA. This chain is tRNA (guanine-N(7)-)-methyltransferase, found in Chromobacterium violaceum (strain ATCC 12472 / DSM 30191 / JCM 1249 / CCUG 213 / NBRC 12614 / NCIMB 9131 / NCTC 9757 / MK).